The primary structure comprises 1325 residues: Nucleoporin nup146 (1325 aa).

Disordered stretches follow at residues M1–S20, V453–N474, G758–H951, and F973–L994. The segment covering Q763 to L778 has biased composition (polar residues). The span at S779–E791 shows a compositional bias: basic and acidic residues. A compositionally biased stretch (polar residues) spans T792–K801. The segment covering Q802 to G811 has biased composition (basic and acidic residues). 2 stretches are compositionally biased toward polar residues: residues A816 to S835 and F850 to F861. A compositionally biased stretch (basic and acidic residues) spans L867–D881. T899 carries the post-translational modification Phosphothreonine. A compositionally biased stretch (acidic residues) spans S927–S937. At T946 the chain carries Phosphothreonine. S1041, S1043, and S1044 each carry phosphoserine.

It localises to the cytoplasm. Its subcellular location is the nucleus. In terms of biological role, functions as a component of the nuclear pore complex (NPC). NPC components, collectively referred to as nucleoporins (NUPs), can play the role of both NPC structural components and of docking or interaction partners for transiently associated nuclear transport factors. Active directional transport is assured by both, a Phe-Gly (FG) repeat affinity gradient for these transport factors across the NPC and a transport cofactor concentration gradient across the nuclear envelope. This is Nucleoporin nup146 (nup146) from Schizosaccharomyces pombe (strain 972 / ATCC 24843) (Fission yeast).